The primary structure comprises 112 residues: Nitrogen regulatory protein P-II (112 aa).

An O-UMP-tyrosine modification is found at tyrosine 51.

Belongs to the P(II) protein family. In terms of assembly, homotrimer.

It is found in the plastid. The protein localises to the chloroplast. In terms of biological role, P-II indirectly controls the transcription of the glutamine synthetase gene (glnA). P-II prevents NR-II-catalyzed conversion of NR-I to NR-I-phosphate, the transcriptional activator of glnA. When P-II is uridylylated to P-II-UMP, these events are reversed. When the ratio of Gln to 2-ketoglutarate decreases, P-II is uridylylated to P-II-UMP, which causes the deadenylation of glutamine synthetase, so activating the enzyme. The sequence is that of Nitrogen regulatory protein P-II (glnB) from Porphyra purpurea (Red seaweed).